Consider the following 217-residue polypeptide: Peptide methionine sulfoxide reductase MsrA 1 (217 aa).

C54 is a catalytic residue.

The protein belongs to the MsrA Met sulfoxide reductase family.

It catalyses the reaction L-methionyl-[protein] + [thioredoxin]-disulfide + H2O = L-methionyl-(S)-S-oxide-[protein] + [thioredoxin]-dithiol. The enzyme catalyses [thioredoxin]-disulfide + L-methionine + H2O = L-methionine (S)-S-oxide + [thioredoxin]-dithiol. Its function is as follows. Has an important function as a repair enzyme for proteins that have been inactivated by oxidation. Catalyzes the reversible oxidation-reduction of methionine sulfoxide in proteins to methionine. This Caulobacter vibrioides (strain ATCC 19089 / CIP 103742 / CB 15) (Caulobacter crescentus) protein is Peptide methionine sulfoxide reductase MsrA 1 (msrA1).